Consider the following 426-residue polypeptide: D-tagatose-1,6-bisphosphate aldolase subunit KbaZ (426 aa).

It belongs to the GatZ/KbaZ family. KbaZ subfamily. As to quaternary structure, forms a complex with KbaY.

Its pathway is carbohydrate metabolism; D-tagatose 6-phosphate degradation; D-glyceraldehyde 3-phosphate and glycerone phosphate from D-tagatose 6-phosphate: step 2/2. Its function is as follows. Component of the tagatose-1,6-bisphosphate aldolase KbaYZ that is required for full activity and stability of the Y subunit. Could have a chaperone-like function for the proper and stable folding of KbaY. When expressed alone, KbaZ does not show any aldolase activity. This chain is D-tagatose-1,6-bisphosphate aldolase subunit KbaZ, found in Escherichia coli O8 (strain IAI1).